A 130-amino-acid polypeptide reads, in one-letter code: Glycoprotein hormone alpha-2 (130 aa).

Positions 1–22 (MPMAPRVLLFCLLGLAVTEGHG) are cleaved as a signal peptide. Disulfide bonds link Cys32–Cys90, Cys49–Cys104, Cys58–Cys120, and Cys62–Cys122. 2 N-linked (GlcNAc...) asparagine glycosylation sites follow: Asn38 and Asn82.

It belongs to the glycoprotein hormones subunit alpha family. Heterodimer with GPHB5; this heterodimer interacts with thyroid-stimulating hormone receptor (TSHR), and hence stimulates cAMP production.

It localises to the secreted. In terms of biological role, functions as a heterodimeric glycoprotein hormone with GPHB5 able to bind and activate the thyroid-stimulating hormone receptor (TSHR), leading to increased cAMP production. Plays a central role in controlling thyroid cell metabolism. This chain is Glycoprotein hormone alpha-2 (Gpha2), found in Rattus norvegicus (Rat).